The primary structure comprises 155 residues: Small ribosomal subunit protein uS7cz/uS7cy (155 aa).

The protein belongs to the universal ribosomal protein uS7 family. As to quaternary structure, part of the 30S ribosomal subunit.

Its subcellular location is the plastid. It is found in the chloroplast. Its function is as follows. One of the primary rRNA binding proteins, it binds directly to 16S rRNA where it nucleates assembly of the head domain of the 30S subunit. The polypeptide is Small ribosomal subunit protein uS7cz/uS7cy (rps7-A) (Jasminum nudiflorum (Winter jasmine)).